Here is a 98-residue protein sequence, read N- to C-terminus: NADH-ubiquinone oxidoreductase chain 4L (98 aa).

3 helical membrane-spanning segments follow: residues 1 to 21 (MSMVYINIFMAFTVSLMGLLV), 29 to 49 (SLLCLEGMMLSLFIMMTMAIL), and 61 to 81 (IILLVFAACEAALGLSLLVMV).

Belongs to the complex I subunit 4L family. In terms of assembly, core subunit of respiratory chain NADH dehydrogenase (Complex I) which is composed of 45 different subunits.

The protein resides in the mitochondrion inner membrane. The enzyme catalyses a ubiquinone + NADH + 5 H(+)(in) = a ubiquinol + NAD(+) + 4 H(+)(out). In terms of biological role, core subunit of the mitochondrial membrane respiratory chain NADH dehydrogenase (Complex I) which catalyzes electron transfer from NADH through the respiratory chain, using ubiquinone as an electron acceptor. Part of the enzyme membrane arm which is embedded in the lipid bilayer and involved in proton translocation. In Lynx canadensis (Canada lynx), this protein is NADH-ubiquinone oxidoreductase chain 4L (MT-ND4L).